Here is a 428-residue protein sequence, read N- to C-terminus: UPF0229 protein YeaH (428 aa).

Positions 78 to 90 are enriched in basic and acidic residues; that stretch reads GNDHFIQNDRIER. The disordered stretch occupies residues 78–111; the sequence is GNDHFIQNDRIERPQGGGGGGSGSGQGQASQDGE. Positions 92 to 103 are enriched in gly residues; the sequence is QGGGGGGSGSGQ.

The protein belongs to the UPF0229 family.

The protein is UPF0229 protein YeaH of Salmonella enteritidis PT4 (strain P125109).